Here is a 128-residue protein sequence, read N- to C-terminus: Large-conductance mechanosensitive channel (128 aa).

Transmembrane regions (helical) follow at residues 10 to 30 (FAMRGNVVDMAVGVIIGGAFG) and 76 to 96 (GMFIQNVFDFIIIAFAIFLMI).

Belongs to the MscL family. As to quaternary structure, homopentamer.

Its subcellular location is the cell inner membrane. Channel that opens in response to stretch forces in the membrane lipid bilayer. May participate in the regulation of osmotic pressure changes within the cell. This is Large-conductance mechanosensitive channel from Actinobacillus succinogenes (strain ATCC 55618 / DSM 22257 / CCUG 43843 / 130Z).